We begin with the raw amino-acid sequence, 660 residues long: Bifunctional polymyxin resistance protein ArnA (660 aa).

The segment at 1-304 (MKTVVFAYHD…TLGLVQGSRL (304 aa)) is formyltransferase ArnAFT. 86–88 (HLI) contributes to the (6R)-10-formyltetrahydrofolate binding site. H104 serves as the catalytic Proton donor; for formyltransferase activity. (6R)-10-formyltetrahydrofolate contacts are provided by residues R114 and 136–140 (VKRAD). Residues 314-660 (RRTRVLILGV…RTVDLTDKPS (347 aa)) are dehydrogenase ArnADH. Residues D347 and 368–369 (DI) contribute to the NAD(+) site. UDP-alpha-D-glucuronate is bound by residues A393, Y398, and 432–433 (TS). E434 (proton acceptor; for decarboxylase activity) is an active-site residue. UDP-alpha-D-glucuronate contacts are provided by residues R460, N492, 526–535 (KLIDGGKQKR), and Y613. The Proton donor; for decarboxylase activity role is filled by R619.

This sequence in the N-terminal section; belongs to the Fmt family. UDP-L-Ara4N formyltransferase subfamily. It in the C-terminal section; belongs to the NAD(P)-dependent epimerase/dehydratase family. UDP-glucuronic acid decarboxylase subfamily. Homohexamer, formed by a dimer of trimers.

It carries out the reaction UDP-alpha-D-glucuronate + NAD(+) = UDP-beta-L-threo-pentopyranos-4-ulose + CO2 + NADH. It catalyses the reaction UDP-4-amino-4-deoxy-beta-L-arabinose + (6R)-10-formyltetrahydrofolate = UDP-4-deoxy-4-formamido-beta-L-arabinose + (6S)-5,6,7,8-tetrahydrofolate + H(+). The protein operates within nucleotide-sugar biosynthesis; UDP-4-deoxy-4-formamido-beta-L-arabinose biosynthesis; UDP-4-deoxy-4-formamido-beta-L-arabinose from UDP-alpha-D-glucuronate: step 1/3. It functions in the pathway nucleotide-sugar biosynthesis; UDP-4-deoxy-4-formamido-beta-L-arabinose biosynthesis; UDP-4-deoxy-4-formamido-beta-L-arabinose from UDP-alpha-D-glucuronate: step 3/3. Its pathway is bacterial outer membrane biogenesis; lipopolysaccharide biosynthesis. Functionally, bifunctional enzyme that catalyzes the oxidative decarboxylation of UDP-glucuronic acid (UDP-GlcUA) to UDP-4-keto-arabinose (UDP-Ara4O) and the addition of a formyl group to UDP-4-amino-4-deoxy-L-arabinose (UDP-L-Ara4N) to form UDP-L-4-formamido-arabinose (UDP-L-Ara4FN). The modified arabinose is attached to lipid A and is required for resistance to polymyxin and cationic antimicrobial peptides. This Escherichia coli O157:H7 protein is Bifunctional polymyxin resistance protein ArnA.